The chain runs to 88 residues: Small ribosomal subunit protein bS20 (88 aa).

The protein belongs to the bacterial ribosomal protein bS20 family.

Binds directly to 16S ribosomal RNA. The polypeptide is Small ribosomal subunit protein bS20 (Clostridium kluyveri (strain NBRC 12016)).